A 326-amino-acid chain; its full sequence is Protein FAM110C (326 aa).

Disordered stretches follow at residues 1–37, 51–80, and 201–221; these read MRAL…KSAV, TLGS…PSTL, and VELR…LSSR. A compositionally biased stretch (polar residues) spans 209–221; that stretch reads KGLQRSQSDLSSR. A Phosphoserine modification is found at S255.

This sequence belongs to the FAM110 family. Interacts with AKT1; the interaction is transient and follows AKT1 activation. Interacts with PPP2CA and alpha-tubulin.

The protein localises to the cytoplasm. It is found in the cytoskeleton. Its subcellular location is the microtubule organizing center. It localises to the centrosome. The protein resides in the spindle pole. The protein localises to the nucleus. In terms of biological role, may play a role in microtubule organization. May play a role in cell spreading and cell migration of epithelial cells; the function may involve the AKT1 signaling pathway. The polypeptide is Protein FAM110C (Fam110c) (Rattus norvegicus (Rat)).